Reading from the N-terminus, the 698-residue chain is UvrABC system protein B (698 aa).

The 176-residue stretch at 35 to 210 folds into the Helicase ATP-binding domain; sequence ARLQAGEKDI…TFRVRGDTVE (176 aa). 48-55 lines the ATP pocket; that stretch reads GATGTGKS. The short motif at 101–124 is the Beta-hairpin element; the sequence is YYDYYQPEAYVPSSDTYIEKDSSI. Residues 438–604 form the Helicase C-terminal domain; that stretch reads QIDDLLAEIN…PLRKRIGDIT (167 aa). Residues 654-689 form the UVR domain; the sequence is AELIQELTDQMHVAAGELQFEVAARLRDEISDLKKE.

It belongs to the UvrB family. As to quaternary structure, forms a heterotetramer with UvrA during the search for lesions. Interacts with UvrC in an incision complex.

It is found in the cytoplasm. Functionally, the UvrABC repair system catalyzes the recognition and processing of DNA lesions. A damage recognition complex composed of 2 UvrA and 2 UvrB subunits scans DNA for abnormalities. Upon binding of the UvrA(2)B(2) complex to a putative damaged site, the DNA wraps around one UvrB monomer. DNA wrap is dependent on ATP binding by UvrB and probably causes local melting of the DNA helix, facilitating insertion of UvrB beta-hairpin between the DNA strands. Then UvrB probes one DNA strand for the presence of a lesion. If a lesion is found the UvrA subunits dissociate and the UvrB-DNA preincision complex is formed. This complex is subsequently bound by UvrC and the second UvrB is released. If no lesion is found, the DNA wraps around the other UvrB subunit that will check the other stand for damage. The polypeptide is UvrABC system protein B (Beutenbergia cavernae (strain ATCC BAA-8 / DSM 12333 / CCUG 43141 / JCM 11478 / NBRC 16432 / NCIMB 13614 / HKI 0122)).